A 789-amino-acid polypeptide reads, in one-letter code: DEAD-box ATP-dependent RNA helicase 28 (789 aa).

Positions 1-152 (MPSSFFFEDA…AEYKPEDATP (152 aa)) are disordered. Residues 13–66 (DELELIRNQEDSSEEDVKEGEAEEHEAGEDEDGEEEYEEEDDDEEEEDEKRKRD) are a coiled coil. The segment covering 23-60 (DSSEEDVKEGEAEEHEAGEDEDGEEEYEEEDDDEEEED) has biased composition (acidic residues). Residues 83 to 99 (GEEHARRHTTSIDEKIS) show a composition bias toward basic and acidic residues. Residues 110–135 (SINEEEEEEEEEEDASDAETDKQEEY) adopt a coiled-coil conformation. The span at 112–127 (NEEEEEEEEEEDASDA) shows a compositional bias: acidic residues. The short motif at 167–195 (DTFMELNLSRPLLRACETLGYKKPTPIQA) is the Q motif element. Residues 198 to 372 (IPLALTGRDL…KLSLNKPLRL (175 aa)) enclose the Helicase ATP-binding domain. 211–218 (AITGSGKT) lines the ATP pocket. Residues 320 to 323 (DEAD) carry the DEAD box motif. A Helicase C-terminal domain is found at 402–546 (VLLSLCTRTF…SRVIPEQSIV (145 aa)). Coiled coils occupy residues 563 to 591 (ISAE…HRDE) and 628 to 677 (SADR…EDEE). The segment at 611–789 (AQAEKDSAGN…FKSKARYKRR (179 aa)) is disordered. Basic and acidic residues predominate over residues 628-637 (SADRAEDLKM). Residues 638-656 (KEKRKREREKNLPRKKRRK) are compositionally biased toward basic residues. A compositionally biased stretch (acidic residues) spans 665 to 678 (EDNEGEEEEEDEEG). Basic and acidic residues-rich tracts occupy residues 691 to 701 (KKQETDKKGLT), 718 to 734 (RAID…DKKQ), and 743 to 761 (PRGE…EKKQ). Positions 772–789 (PRTKSKNSFKSKARYKRR) are enriched in basic residues.

Belongs to the DEAD box helicase family. DDX27/DRS1 subfamily.

It carries out the reaction ATP + H2O = ADP + phosphate + H(+). The protein is DEAD-box ATP-dependent RNA helicase 28 (RH28) of Arabidopsis thaliana (Mouse-ear cress).